Here is a 341-residue protein sequence, read N- to C-terminus: tRNA N6-adenosine threonylcarbamoyltransferase (341 aa).

Fe cation-binding residues include His-113 and His-117. Residues 141 to 145 (LVSGG), Asp-174, Gly-187, and Asn-282 contribute to the substrate site. Asp-310 contacts Fe cation.

Belongs to the KAE1 / TsaD family. It depends on Fe(2+) as a cofactor.

The protein localises to the cytoplasm. It carries out the reaction L-threonylcarbamoyladenylate + adenosine(37) in tRNA = N(6)-L-threonylcarbamoyladenosine(37) in tRNA + AMP + H(+). Functionally, required for the formation of a threonylcarbamoyl group on adenosine at position 37 (t(6)A37) in tRNAs that read codons beginning with adenine. Is involved in the transfer of the threonylcarbamoyl moiety of threonylcarbamoyl-AMP (TC-AMP) to the N6 group of A37, together with TsaE and TsaB. TsaD likely plays a direct catalytic role in this reaction. This chain is tRNA N6-adenosine threonylcarbamoyltransferase, found in Porphyromonas gingivalis (strain ATCC BAA-308 / W83).